A 124-amino-acid polypeptide reads, in one-letter code: Small ribosomal subunit protein uS12 (124 aa).

Residues 1–42 (MPTTQQLIRKGRKTEEETSDAPALEGSPQRRGVCTRVYTTTP) are disordered. Position 89 is a 3-methylthioaspartic acid (Asp89). The interval 105-124 (AGVEERRQGRSKYGTKKPRE) is disordered. Positions 113-124 (GRSKYGTKKPRE) are enriched in basic residues.

Belongs to the universal ribosomal protein uS12 family. Part of the 30S ribosomal subunit. Contacts proteins S8 and S17. May interact with IF1 in the 30S initiation complex.

In terms of biological role, with S4 and S5 plays an important role in translational accuracy. Interacts with and stabilizes bases of the 16S rRNA that are involved in tRNA selection in the A site and with the mRNA backbone. Located at the interface of the 30S and 50S subunits, it traverses the body of the 30S subunit contacting proteins on the other side and probably holding the rRNA structure together. The combined cluster of proteins S8, S12 and S17 appears to hold together the shoulder and platform of the 30S subunit. This chain is Small ribosomal subunit protein uS12, found in Salinibacter ruber (strain DSM 13855 / M31).